The following is a 321-amino-acid chain: Phosphopantothenate--cysteine ligase 1 (321 aa).

This sequence belongs to the PPC synthetase family. Homodimer.

The enzyme catalyses (R)-4'-phosphopantothenate + L-cysteine + CTP = N-[(R)-4-phosphopantothenoyl]-L-cysteine + CMP + diphosphate + H(+). Its pathway is cofactor biosynthesis; coenzyme A biosynthesis; CoA from (R)-pantothenate: step 2/5. Its function is as follows. Catalyzes the first step in the biosynthesis of coenzyme A from vitamin B5, where cysteine is conjugated to 4'-phosphopantothenate to form 4-phosphopantothenoylcysteine. The protein is Phosphopantothenate--cysteine ligase 1 of Oryza sativa subsp. japonica (Rice).